Here is a 571-residue protein sequence, read N- to C-terminus: Urease subunit alpha (571 aa).

Residues 133–571 (GGIDTHVHFI…LPLTQRYFLF (439 aa)) form the Urease domain. The Ni(2+) site is built by H138, H140, and K221. K221 bears the N6-carboxylysine mark. Position 223 (H223) interacts with substrate. Ni(2+) contacts are provided by H250 and H276. H324 functions as the Proton donor in the catalytic mechanism. Position 364 (D364) interacts with Ni(2+).

It belongs to the metallo-dependent hydrolases superfamily. Urease alpha subunit family. As to quaternary structure, heterotrimer of UreA (gamma), UreB (beta) and UreC (alpha) subunits. Three heterotrimers associate to form the active enzyme. Requires Ni cation as cofactor. Post-translationally, carboxylation allows a single lysine to coordinate two nickel ions.

The protein localises to the cytoplasm. It carries out the reaction urea + 2 H2O + H(+) = hydrogencarbonate + 2 NH4(+). It participates in nitrogen metabolism; urea degradation; CO(2) and NH(3) from urea (urease route): step 1/1. The polypeptide is Urease subunit alpha (Staphylococcus aureus (strain USA300)).